The primary structure comprises 359 residues: Archaemetzincin-2 (359 aa).

Residue His254 coordinates Zn(2+). Glu255 serves as the catalytic Proton acceptor. The Zn(2+) site is built by His258, His264, Cys265, Cys270, Cys289, and Cys292.

This sequence belongs to the peptidase M54 family. Zn(2+) is required as a cofactor.

Probable zinc metalloprotease. The chain is Archaemetzincin-2 (Amz2) from Rattus norvegicus (Rat).